The following is a 373-amino-acid chain: Leucine aminopeptidase 1 (373 aa).

Positions 1 to 18 (MKLLSVLALSATATSVLG) are cleaved as a signal peptide. N136 is a glycosylation site (N-linked (GlcNAc...) asparagine). Residues H176 and D195 each contribute to the Zn(2+) site. The N-linked (GlcNAc...) asparagine glycan is linked to N196. Zn(2+) is bound by residues E234 and D261. N-linked (GlcNAc...) asparagine glycosylation occurs at N284. A disulfide bridge connects residues C310 and C314. H343 serves as a coordination point for Zn(2+).

The protein belongs to the peptidase M28 family. M28E subfamily. As to quaternary structure, monomer. Requires Zn(2+) as cofactor.

Its subcellular location is the secreted. In terms of biological role, extracellular aminopeptidase which contributes to pathogenicity. This is Leucine aminopeptidase 1 (LAP1) from Trichophyton equinum (Horse ringworm fungus).